A 377-amino-acid chain; its full sequence is Putative glutamate--cysteine ligase 2 (377 aa).

Belongs to the glutamate--cysteine ligase type 2 family. YbdK subfamily.

The enzyme catalyses L-cysteine + L-glutamate + ATP = gamma-L-glutamyl-L-cysteine + ADP + phosphate + H(+). Its function is as follows. ATP-dependent carboxylate-amine ligase which exhibits weak glutamate--cysteine ligase activity. The chain is Putative glutamate--cysteine ligase 2 from Pseudomonas aeruginosa (strain LESB58).